Consider the following 322-residue polypeptide: Lymphatic vessel endothelial hyaluronic acid receptor 1 (322 aa).

Residues 1 to 19 (MARCFSLVLLLTSIWTTRL) form the signal peptide. The Extracellular portion of the chain corresponds to 20–238 (LVQGSLRAEE…EAAGFGGVPT (219 aa)). The region spanning 40–130 (GITLVSKKAN…SRQFAAYCYN (91 aa)) is the Link domain. N-linked (GlcNAc...) asparagine glycosylation is present at N53. Cystine bridges form between C61-C128 and C85-C106. A glycan (N-linked (GlcNAc...) asparagine) is linked at N130. The chain crosses the membrane as a helical span at residues 239–259 (ALLVLALLFFGAAAGLGFCYV). The Cytoplasmic segment spans residues 260-322 (KRYVKAFPFT…TTVRCLEAEV (63 aa)). Residues 279 to 309 (ETKVVKEEKANDSNPNEESKKTDKNPEESKS) are compositionally biased toward basic and acidic residues. The segment at 279-322 (ETKVVKEEKANDSNPNEESKKTDKNPEESKSPSKTTVRCLEAEV) is disordered.

Homodimer; disulfide-linked. Interacts with PDGFB and IGFBP3. Forms a transient ternary complex with PDGFB and PDGFRB in TGN. In terms of processing, O-glycosylated. As to expression, mainly expressed in endothelial cells lining lymphatic vessels.

It localises to the cell membrane. In terms of biological role, ligand-specific transporter trafficking between intracellular organelles (TGN) and the plasma membrane. Plays a role in autocrine regulation of cell growth mediated by growth regulators containing cell surface retention sequence binding (CRS). May act as a hyaluronan (HA) transporter, either mediating its uptake for catabolism within lymphatic endothelial cells themselves, or its transport into the lumen of afferent lymphatic vessels for subsequent re-uptake and degradation in lymph nodes. Binds to pericelluar hyaluronan matrices deposited on the surface of leukocytes and facilitates cell adhesion and migration through lymphatic endothelium. The polypeptide is Lymphatic vessel endothelial hyaluronic acid receptor 1 (LYVE1) (Homo sapiens (Human)).